Reading from the N-terminus, the 548-residue chain is Membrane protein insertase YidC (548 aa).

The chain crosses the membrane as a helical span at residues 6–26; the sequence is NLFLIAFLFVSFMIWQAWQTD. Residues 30 to 53 are disordered; that stretch reads QPLQTQTTQNTTSAAGDAVNQGVP. A run of 4 helical transmembrane segments spans residues 345–365, 420–440, 458–478, and 499–519; these read KFLH…TFIV, LGGC…YYML, LAAQ…MFFI, and PVIF…YYIV.

This sequence belongs to the OXA1/ALB3/YidC family. Type 1 subfamily. In terms of assembly, interacts with the Sec translocase complex via SecD. Specifically interacts with transmembrane segments of nascent integral membrane proteins during membrane integration.

It is found in the cell inner membrane. Functionally, required for the insertion and/or proper folding and/or complex formation of integral membrane proteins into the membrane. Involved in integration of membrane proteins that insert both dependently and independently of the Sec translocase complex, as well as at least some lipoproteins. Aids folding of multispanning membrane proteins. This Erwinia tasmaniensis (strain DSM 17950 / CFBP 7177 / CIP 109463 / NCPPB 4357 / Et1/99) protein is Membrane protein insertase YidC.